A 69-amino-acid chain; its full sequence is Peptide Hact-1 (69 aa).

A signal peptide spans 1–21; sequence MDRKFHLCLLLVILGTIIVQG. Positions 22–57 are excised as a propeptide; that stretch reads APLENENDADPDKPQKYRYYLKRATTEKKDNDPAKP. The cysteines at positions 59 and 68 are disulfide-linked.

Tentacle (ecto and/or endoderm tissue), and possibly also nematoblasts.

It is found in the secreted. The protein resides in the nematocyst. Its function is as follows. Peptide with unknown function. Has a limited effect on human peripheral blood mononuclear cells. Does not show activity against both Gram-positive and Gram-negative bacteria nor is it active on the 26 voltage-gated ion channels tested. In Heliofungia actiniformis (Mushroom coral), this protein is Peptide Hact-1.